Here is an 832-residue protein sequence, read N- to C-terminus: Sodium/hydrogen exchanger 3 (832 aa).

An N-terminal signal peptide occupies residues 1 to 29 (MSGRGGCGPCWGLLLALVLALGALPWTQG). Residues 30 to 50 (AEQEHHDEIQGFQIVTFKWHH) are Extracellular-facing. A helical transmembrane segment spans residues 51-73 (VQDPYIIALWVLVASLAKIVFHL). Residues 74–81 (SHKVTSVV) lie on the Cytoplasmic side of the membrane. A helical membrane pass occupies residues 82–101 (PESALLIVLGLVLGGIVLAA). Over 102–110 (DHIASFTLT) the chain is Extracellular. A helical membrane pass occupies residues 111-128 (PTVFFFYLLPPIVLDAGY). The Cytoplasmic segment spans residues 129-131 (FMP). Residues 132 to 167 (NRLFFSNLGSILLYAVVGTVWNAATTGLSLYGVFLS) traverse the membrane as a helical segment. 2 residues coordinate a 1,2-diacyl-sn-glycero-3-phospho-(1D-myo-inositol): G140 and S141. Residues 168-180 (GIMGELKIGLLDF) are Extracellular-facing. The chain crosses the membrane as a helical span at residues 181–202 (LLFGSLIAAVDPVAVLAVFEEV). Topologically, residues 203 to 204 (HV) are cytoplasmic. The chain crosses the membrane as a helical span at residues 205 to 236 (NEVLFIIVFGESLLNDAVTVVLYNVFQSFVTL). Residues 237–243 (GGDKVTG) lie on the Extracellular side of the membrane. A helical membrane pass occupies residues 244 to 278 (VDCVKGIVSFFVVSLGGTLVGVVFAFLLSLVTRFT). The Cytoplasmic portion of the chain corresponds to 279 to 280 (KH). Residues 281–303 (VRVIEPGFVFIISYLSYLTSEML) traverse the membrane as a helical segment. Residues 304 to 305 (SL) lie on the Extracellular side of the membrane. The chain crosses the membrane as a helical span at residues 306–322 (SSILAITFCGICCQKYV). The Cytoplasmic segment spans residues 323 to 329 (KANISEQ). Residues 330-358 (SATTVRYTMKMLASGAETIIFMFLGISAV) traverse the membrane as a helical segment. The Extracellular portion of the chain corresponds to 359 to 366 (DPLIWTWN). A helical transmembrane segment spans residues 367-388 (TAFVLLTLLFVSVFRAIGVVLQ). The Cytoplasmic portion of the chain corresponds to 389 to 401 (TWLLNRYRMVQLE). Residue M397 participates in a 1,2-diacyl-sn-glycero-3-phospho-(1D-myo-inositol) binding. Residues 402-425 (LIDQVVMSYGGLRGAVAFALVALL) form a helical membrane-spanning segment. The Extracellular segment spans residues 426 to 432 (DGNKVKE). A helical transmembrane segment spans residues 433 to 466 (KNLFVSTTIIVVFFTVIFQGLTIKPLVQWLKVKR). Over 467–832 (SEHREPKLNE…GAEHPESTHM (366 aa)) the chain is Cytoplasmic. A 1,2-diacyl-sn-glycero-3-phospho-(1D-myo-inositol) contacts are provided by Q496, I497, and H499. Phosphoserine is present on residues S554 and S562. An interaction with EZR region spans residues 575-589 (RPSTVEASVSYLLRE). An interaction with NHERF4 region spans residues 590-667 (SASAVCLDMQ…RKRLESFKSA (78 aa)). The segment at 591–696 (ASAVCLDMQS…AQKRRNSSVP (106 aa)) is interaction with AHCYL1. S592 and S607 each carry phosphoserine. S663 is modified (phosphoserine; by SGK1). The segment at 664–706 (FKSAKLGLGQSKKATKHKRERERAQKRRNSSVPNGKLPLDSPA) is disordered. The segment covering 676–692 (KATKHKRERERAQKRRN) has biased composition (basic residues). Phosphoserine is present on residues S719, S813, and S816.

Belongs to the monovalent cation:proton antiporter 1 (CPA1) transporter (TC 2.A.36) family. Homodimer. Found in the forms of complex and dynamic macromolecular complexes. Interacts with CHP1; this interaction increases trafficking and activity at the plasma membrane of SLC9A3. Interacts with CHP2 and SHANK2. Interacts with NHERF4 and interaction decreases in response to elevated calcium ion levels. Binds NHERF1 and NHERF2. Interacts with PDZK1 (via C-terminal PDZ domain). Interacts with AHCYL1; interaction is required for SLC9A3 activity. Interacts with EZR; interaction targets SLC9A3 to the apical membrane. Interacts with SNX27 (via PDZ domains); directs SLC9A3 membrane insertion from early endosomes to the plasma membrane. Post-translationally, phosphorylated by PKA, which inhibits activity. Phosphorylation at Ser-663 by SGK1 is associated with increased abundance at the cell membrane and activity. Phosphorylation at Ser-719 by CSNK2A1 regulates SLC9A3 activity through the formation of multiple signaling complexes. As to expression, intestinal and kidney specific. Most abundant in kidney cortex, followed equally by ileum and ascending colon, then kidney medulla and jejunum. Is absent from duodenum and descending colon.

The protein resides in the apical cell membrane. The protein localises to the cell membrane. It localises to the recycling endosome membrane. Its subcellular location is the early endosome membrane. The catalysed reaction is Na(+)(in) + H(+)(out) = Na(+)(out) + H(+)(in). Its activity is regulated as follows. Seems to switch between active and inactive modes in response to various stimuli. Activated directly or indirectly by membrane phosphatidylinositol (PIs). Regulated by a variety of auxiliary proteins, which facilitate the maturation, cell surface expression and function of the transporter. Inhibited specifically by the drug tenapanor. Functionally, plasma membrane Na(+)/H(+) antiporter. Exchanges intracellular H(+) ions for extracellular Na(+) in 1:1 stoichiometry, playing a key role in salt and fluid absorption and pH homeostasis. Major apical Na(+)/H(+) exchanger in kidney and intestine playing an important role in renal and intestine Na(+) absorption and blood pressure regulation. The sequence is that of Sodium/hydrogen exchanger 3 (SLC9A3) from Oryctolagus cuniculus (Rabbit).